Consider the following 483-residue polypeptide: Probable 4-aminobutyrate aminotransferase, mitochondrial (483 aa).

148-149 (GT) is a binding site for pyridoxal 5'-phosphate. Residue R204 coordinates substrate. Residue K341 is modified to N6-(pyridoxal phosphate)lysine. A pyridoxal 5'-phosphate-binding site is contributed by T365.

The protein belongs to the class-III pyridoxal-phosphate-dependent aminotransferase family. Homodimer. Pyridoxal 5'-phosphate is required as a cofactor.

Its subcellular location is the mitochondrion matrix. It carries out the reaction 4-aminobutanoate + 2-oxoglutarate = succinate semialdehyde + L-glutamate. The catalysed reaction is (S)-3-amino-2-methylpropanoate + 2-oxoglutarate = 2-methyl-3-oxopropanoate + L-glutamate. The sequence is that of Probable 4-aminobutyrate aminotransferase, mitochondrial (gta-1) from Caenorhabditis elegans.